A 273-amino-acid chain; its full sequence is Urease accessory protein UreD (273 aa).

Belongs to the UreD family. As to quaternary structure, ureD, UreF and UreG form a complex that acts as a GTP-hydrolysis-dependent molecular chaperone, activating the urease apoprotein by helping to assemble the nickel containing metallocenter of UreC. The UreE protein probably delivers the nickel.

Its subcellular location is the cytoplasm. In terms of biological role, required for maturation of urease via the functional incorporation of the urease nickel metallocenter. The polypeptide is Urease accessory protein UreD (Rhizobium leguminosarum bv. trifolii (strain WSM2304)).